We begin with the raw amino-acid sequence, 209 residues long: SAGA-associated factor 11 homolog 1 (209 aa).

A disordered region spans residues 1 to 36 (MSRTIVVKNPRTSGKDEDKAQIPSQDELPSGSSGAK). An SGF11-type zinc finger spans residues 120 to 141 (CCCPNCERMVAAVRFAPHLQTC). A compositionally biased stretch (low complexity) spans 156–166 (LTVSSRSSSTS). Residues 156–209 (LTVSSRSSSTSTGGGQANEKSTDDEDWSLDSRPGKSTKNSRNKGSKKNQKNKLK) are disordered. Basic residues predominate over residues 193-209 (KNSRNKGSKKNQKNKLK).

This sequence belongs to the SGF11 family. As to quaternary structure, component of some SAGA transcription coactivator-HAT complexes, at least composed of Ada2b, not/nonstop, Pcaf/Gcn5, Sgf11 and Spt3. Within the SAGA complex, Sgf11, e(y)2, and not/nonstop form an additional subcomplex of SAGA called the DUB module (deubiquitination module). Interacts directly with not/nonstop. Interacts with the AMEX complex component xmas-2. Interacts with Cbp80; important for promoter recruitment of Sgf11 that is not associated with the DUB module.

The protein localises to the nucleus. The protein resides in the nucleoplasm. Its subcellular location is the cytoplasm. In terms of biological role, component of the transcription regulatory histone acetylation (HAT) complex SAGA, a multiprotein complex that activates transcription by remodeling chromatin and mediating histone acetylation and deubiquitination. Within the SAGA complex, participates in a subcomplex that specifically deubiquitinates histone H2B. The SAGA complex is recruited to specific gene promoters by activators, where it is required for transcription. Required for nuclear receptor-mediated transactivation. Binds independently on SAGA to promoters in an RNA-dependent manner. Binds to mRNA and is essential for total mRNA export from the nucleus. Required to counteract heterochromatin silencing. Controls the development of neuronal connectivity in visual system by being required for accurate axon targeting in the optic lobe. Required for expression of ecdysone-induced genes such as br/broad. The chain is SAGA-associated factor 11 homolog 1 from Drosophila willistoni (Fruit fly).